The following is a 430-amino-acid chain: Mitochondrial distribution and morphology protein 10 (430 aa).

Residues 215–234 (SSSAMNPPSGTSASETNGSG) show a composition bias toward polar residues. 2 disordered regions span residues 215 to 237 (SSSA…GPSV) and 339 to 393 (LGAN…GPKE).

This sequence belongs to the MDM10 family. As to quaternary structure, component of the ER-mitochondria encounter structure (ERMES) or MDM complex, composed of MMM1, MDM10, MDM12 and MDM34. Associates with the mitochondrial outer membrane sorting assembly machinery SAM(core) complex.

Its subcellular location is the mitochondrion outer membrane. Functionally, component of the ERMES/MDM complex, which serves as a molecular tether to connect the endoplasmic reticulum and mitochondria. Components of this complex are involved in the control of mitochondrial shape and protein biogenesis and may function in phospholipid exchange. MDM10 is involved in the late assembly steps of the general translocase of the mitochondrial outer membrane (TOM complex). Functions in the TOM40-specific route of the assembly of outer membrane beta-barrel proteins, including the association of TOM40 with the receptor TOM22 and small TOM proteins. Can associate with the SAM(core) complex as well as the MDM12-MMM1 complex, both involved in late steps of the major beta-barrel assembly pathway, that is responsible for biogenesis of all outer membrane beta-barrel proteins. May act as a switch that shuttles between both complexes and channels precursor proteins into the TOM40-specific pathway. Plays a role in mitochondrial morphology and in the inheritance of mitochondria. The sequence is that of Mitochondrial distribution and morphology protein 10 from Chaetomium globosum (strain ATCC 6205 / CBS 148.51 / DSM 1962 / NBRC 6347 / NRRL 1970) (Soil fungus).